A 268-amino-acid chain; its full sequence is NH(3)-dependent NAD(+) synthetase (268 aa).

46 to 53 (GVSGGQDS) lines the ATP pocket. Residue Asp52 coordinates Mg(2+). Arg140 lines the deamido-NAD(+) pocket. Thr160 is a binding site for ATP. Glu165 is a Mg(2+) binding site. Deamido-NAD(+) contacts are provided by Lys173 and Asp180. Lys189 lines the ATP pocket. 260-261 (HK) serves as a coordination point for deamido-NAD(+).

The protein belongs to the NAD synthetase family. In terms of assembly, homodimer.

The catalysed reaction is deamido-NAD(+) + NH4(+) + ATP = AMP + diphosphate + NAD(+) + H(+). It participates in cofactor biosynthesis; NAD(+) biosynthesis; NAD(+) from deamido-NAD(+) (ammonia route): step 1/1. Functionally, catalyzes the ATP-dependent amidation of deamido-NAD to form NAD. Uses ammonia as a nitrogen source. In Buchnera aphidicola subsp. Acyrthosiphon pisum (strain Tuc7), this protein is NH(3)-dependent NAD(+) synthetase.